A 149-amino-acid polypeptide reads, in one-letter code: MRAVIQRVKNAKVEVEGKTVGKIENGLLVLLGVGKDDNKEDIKYLAEKIINLRIFDDENGKMNLSLLDINGELLIVSQFTLYGDCRKGRRPSYSESAPPDIAKKLYEEFVNACKNYNLKVETGEFGAHMQVSLVNDGPVTLLLDSKKVF.

A Gly-cisPro motif, important for rejection of L-amino acids motif is present at residues 137–138; sequence GP.

It belongs to the DTD family. As to quaternary structure, homodimer.

Its subcellular location is the cytoplasm. The catalysed reaction is glycyl-tRNA(Ala) + H2O = tRNA(Ala) + glycine + H(+). The enzyme catalyses a D-aminoacyl-tRNA + H2O = a tRNA + a D-alpha-amino acid + H(+). Its function is as follows. An aminoacyl-tRNA editing enzyme that deacylates mischarged D-aminoacyl-tRNAs. Also deacylates mischarged glycyl-tRNA(Ala), protecting cells against glycine mischarging by AlaRS. Acts via tRNA-based rather than protein-based catalysis; rejects L-amino acids rather than detecting D-amino acids in the active site. By recycling D-aminoacyl-tRNA to D-amino acids and free tRNA molecules, this enzyme counteracts the toxicity associated with the formation of D-aminoacyl-tRNA entities in vivo and helps enforce protein L-homochirality. The protein is D-aminoacyl-tRNA deacylase of Thermosipho africanus (strain TCF52B).